The following is an 886-amino-acid chain: Pyruvate dehydrogenase E1 component (886 aa).

As to quaternary structure, homodimer. Part of the PDH complex, consisting of multiple copies of pyruvate dehydrogenase (E1), dihydrolipoamide acetyltransferase (E2) and lipoamide dehydrogenase (E3). Requires thiamine diphosphate as cofactor.

The catalysed reaction is N(6)-[(R)-lipoyl]-L-lysyl-[protein] + pyruvate + H(+) = N(6)-[(R)-S(8)-acetyldihydrolipoyl]-L-lysyl-[protein] + CO2. Component of the pyruvate dehydrogenase (PDH) complex, that catalyzes the overall conversion of pyruvate to acetyl-CoA and CO(2). The sequence is that of Pyruvate dehydrogenase E1 component (aceE) from Haemophilus influenzae (strain ATCC 51907 / DSM 11121 / KW20 / Rd).